We begin with the raw amino-acid sequence, 619 residues long: ESX-2 secretion system protein EccA2 (619 aa).

373–380 (GPPGTGKT) is an ATP binding site.

Belongs to the CbxX/CfxQ family. In terms of assembly, part of the ESX-2 / type VII secretion system (T7SS), which is composed of cytosolic and membrane components. Residues 522-619 interact with an artificial EsxB-EsxA heterodimer from the adjacent ESX-1 locus.

The protein resides in the cytoplasm. Shows ATPase activity. Could provide energy for export of ESX-2 substrates. This chain is ESX-2 secretion system protein EccA2 (eccA2), found in Mycobacterium tuberculosis (strain ATCC 25618 / H37Rv).